Here is a 612-residue protein sequence, read N- to C-terminus: 1,8-cineole synthase, chloroplastic (612 aa).

The N-terminal 52 residues, 1-52 (MALVSVAPLASRSCLSKSLISSTHELKPLRRTILPTLRWKSATPSINMCLTT), are a transit peptide targeting the chloroplast. Mg(2+)-binding residues include Asp-363, Asp-367, and Asp-515. The short motif at 363–367 (DDIYD) is the DDXXD motif element.

This sequence belongs to the terpene synthase family. Tpsd subfamily. Mg(2+) is required as a cofactor. It depends on Mn(2+) as a cofactor.

The protein resides in the plastid. Its subcellular location is the chloroplast. The catalysed reaction is (2E)-geranyl diphosphate + H2O = 1,8-cineole + diphosphate. It participates in terpene metabolism; oleoresin biosynthesis. Functionally, terpene synthase (TPS) involved in the biosynthesis of monoterpene natural products included in conifer oleoresin secretions and volatile emissions; these compounds contribute to biotic and abiotic stress defense against herbivores and pathogens. Catalyzes the conversion of (2E)-geranyl diphosphate (GPP) to 1,8-cineole. This is 1,8-cineole synthase, chloroplastic from Picea sitchensis (Sitka spruce).